Reading from the N-terminus, the 171-residue chain is 3-hydroxydecanoyl-[acyl-carrier-protein] dehydratase (171 aa).

The active site involves histidine 70.

It belongs to the thioester dehydratase family. FabA subfamily. In terms of assembly, homodimer.

The protein resides in the cytoplasm. The enzyme catalyses a (3R)-hydroxyacyl-[ACP] = a (2E)-enoyl-[ACP] + H2O. It catalyses the reaction (3R)-hydroxydecanoyl-[ACP] = (2E)-decenoyl-[ACP] + H2O. It carries out the reaction (2E)-decenoyl-[ACP] = (3Z)-decenoyl-[ACP]. The protein operates within lipid metabolism; fatty acid biosynthesis. Functionally, necessary for the introduction of cis unsaturation into fatty acids. Catalyzes the dehydration of (3R)-3-hydroxydecanoyl-ACP to E-(2)-decenoyl-ACP and then its isomerization to Z-(3)-decenoyl-ACP. Can catalyze the dehydratase reaction for beta-hydroxyacyl-ACPs with saturated chain lengths up to 16:0, being most active on intermediate chain length. This chain is 3-hydroxydecanoyl-[acyl-carrier-protein] dehydratase, found in Pseudomonas putida (strain GB-1).